A 296-amino-acid polypeptide reads, in one-letter code: Acetyl-coenzyme A carboxylase carboxyl transferase subunit beta (296 aa).

Residues 25 to 294 enclose the CoA carboxyltransferase N-terminal domain; it reads LWIKDPSTGE…NSDAPAPPEA (270 aa).

Belongs to the AccD/PCCB family. Acetyl-CoA carboxylase is a heterohexamer composed of biotin carboxyl carrier protein (AccB), biotin carboxylase (AccC) and two subunits each of ACCase subunit alpha (AccA) and ACCase subunit beta (AccD).

The protein localises to the cytoplasm. It catalyses the reaction N(6)-carboxybiotinyl-L-lysyl-[protein] + acetyl-CoA = N(6)-biotinyl-L-lysyl-[protein] + malonyl-CoA. It functions in the pathway lipid metabolism; malonyl-CoA biosynthesis; malonyl-CoA from acetyl-CoA: step 1/1. Its function is as follows. Component of the acetyl coenzyme A carboxylase (ACC) complex. Biotin carboxylase (BC) catalyzes the carboxylation of biotin on its carrier protein (BCCP) and then the CO(2) group is transferred by the transcarboxylase to acetyl-CoA to form malonyl-CoA. The sequence is that of Acetyl-coenzyme A carboxylase carboxyl transferase subunit beta from Brucella ovis (strain ATCC 25840 / 63/290 / NCTC 10512).